Consider the following 156-residue polypeptide: Transcription antitermination protein NusB (156 aa).

This sequence belongs to the NusB family.

In terms of biological role, involved in transcription antitermination. Required for transcription of ribosomal RNA (rRNA) genes. Binds specifically to the boxA antiterminator sequence of the ribosomal RNA (rrn) operons. The protein is Transcription antitermination protein NusB of Syntrophotalea carbinolica (strain DSM 2380 / NBRC 103641 / GraBd1) (Pelobacter carbinolicus).